The chain runs to 103 residues: DNA-directed RNA polymerase subunit omega (103 aa).

This sequence belongs to the RNA polymerase subunit omega family. The RNAP catalytic core consists of 2 alpha, 1 beta, 1 beta' and 1 omega subunit. When a sigma factor is associated with the core the holoenzyme is formed, which can initiate transcription.

It carries out the reaction RNA(n) + a ribonucleoside 5'-triphosphate = RNA(n+1) + diphosphate. Its function is as follows. Promotes RNA polymerase assembly. Latches the N- and C-terminal regions of the beta' subunit thereby facilitating its interaction with the beta and alpha subunits. This is DNA-directed RNA polymerase subunit omega from Streptococcus agalactiae serotype III (strain NEM316).